A 127-amino-acid chain; its full sequence is Large ribosomal subunit protein uL22 (127 aa).

It belongs to the universal ribosomal protein uL22 family. Part of the 50S ribosomal subunit.

Functionally, this protein binds specifically to 23S rRNA; its binding is stimulated by other ribosomal proteins, e.g. L4, L17, and L20. It is important during the early stages of 50S assembly. It makes multiple contacts with different domains of the 23S rRNA in the assembled 50S subunit and ribosome. Its function is as follows. The globular domain of the protein is located near the polypeptide exit tunnel on the outside of the subunit, while an extended beta-hairpin is found that lines the wall of the exit tunnel in the center of the 70S ribosome. The protein is Large ribosomal subunit protein uL22 of Methylobacterium nodulans (strain LMG 21967 / CNCM I-2342 / ORS 2060).